The following is a 427-amino-acid chain: Serine--tRNA ligase (427 aa).

231–233 (TAE) serves as a coordination point for L-serine. Residue 262 to 264 (RSE) coordinates ATP. Glu285 is an L-serine binding site. 349-352 (EISS) provides a ligand contact to ATP. Ser385 lines the L-serine pocket.

This sequence belongs to the class-II aminoacyl-tRNA synthetase family. Type-1 seryl-tRNA synthetase subfamily. In terms of assembly, homodimer. The tRNA molecule binds across the dimer.

It localises to the cytoplasm. It catalyses the reaction tRNA(Ser) + L-serine + ATP = L-seryl-tRNA(Ser) + AMP + diphosphate + H(+). The catalysed reaction is tRNA(Sec) + L-serine + ATP = L-seryl-tRNA(Sec) + AMP + diphosphate + H(+). It participates in aminoacyl-tRNA biosynthesis; selenocysteinyl-tRNA(Sec) biosynthesis; L-seryl-tRNA(Sec) from L-serine and tRNA(Sec): step 1/1. Functionally, catalyzes the attachment of serine to tRNA(Ser). Is also able to aminoacylate tRNA(Sec) with serine, to form the misacylated tRNA L-seryl-tRNA(Sec), which will be further converted into selenocysteinyl-tRNA(Sec). This Hahella chejuensis (strain KCTC 2396) protein is Serine--tRNA ligase.